A 215-amino-acid polypeptide reads, in one-letter code: Probable transaldolase (215 aa).

The active-site Schiff-base intermediate with substrate is the Lys83.

The protein belongs to the transaldolase family. Type 3B subfamily.

The protein resides in the cytoplasm. The enzyme catalyses D-sedoheptulose 7-phosphate + D-glyceraldehyde 3-phosphate = D-erythrose 4-phosphate + beta-D-fructose 6-phosphate. Its pathway is carbohydrate degradation; pentose phosphate pathway; D-glyceraldehyde 3-phosphate and beta-D-fructose 6-phosphate from D-ribose 5-phosphate and D-xylulose 5-phosphate (non-oxidative stage): step 2/3. Its function is as follows. Transaldolase is important for the balance of metabolites in the pentose-phosphate pathway. The protein is Probable transaldolase of Desulforapulum autotrophicum (strain ATCC 43914 / DSM 3382 / VKM B-1955 / HRM2) (Desulfobacterium autotrophicum).